The primary structure comprises 743 residues: tRNA(Met) cytidine acetyltransferase TmcA (743 aa).

ATP is bound by residues Gln216, Gly241 to Leu250, and Arg390. The 185-residue stretch at Leu420–Ser604 folds into the N-acetyltransferase domain. Acetyl-CoA is bound by residues Ile531 to Val533 and Gln538 to Ser544.

The protein belongs to the RNA cytidine acetyltransferase family. TmcA subfamily.

It localises to the cytoplasm. It carries out the reaction cytidine(34) in elongator tRNA(Met) + acetyl-CoA + ATP + H2O = N(4)-acetylcytidine(34) in elongator tRNA(Met) + ADP + phosphate + CoA + H(+). In terms of biological role, catalyzes the formation of N(4)-acetylcytidine (ac(4)C) at the wobble position of tRNA(Met), by using acetyl-CoA as an acetyl donor and ATP (or GTP). The chain is tRNA(Met) cytidine acetyltransferase TmcA from Saccharolobus islandicus (strain Y.G.57.14 / Yellowstone #1) (Sulfolobus islandicus).